The following is a 170-amino-acid chain: Small ribosomal subunit protein uS5 (170 aa).

An S5 DRBM domain is found at 13 to 76; that stretch reads LLEKLVGVRR…ENARKNMISV (64 aa).

It belongs to the universal ribosomal protein uS5 family. As to quaternary structure, part of the 30S ribosomal subunit. Contacts proteins S4 and S8.

In terms of biological role, with S4 and S12 plays an important role in translational accuracy. Located at the back of the 30S subunit body where it stabilizes the conformation of the head with respect to the body. The chain is Small ribosomal subunit protein uS5 from Nitrosococcus oceani (strain ATCC 19707 / BCRC 17464 / JCM 30415 / NCIMB 11848 / C-107).